Consider the following 452-residue polypeptide: Tryptophan biosynthesis protein TrpCF (452 aa).

An indole-3-glycerol phosphate synthase region spans residues 1-256; it reads MQTVLAKIVA…AAVRRVLLGE (256 aa). The interval 257-452 is N-(5'-phosphoribosyl)anthranilate isomerase; sequence NKVCGLTRAQ…ASVFQTLRAY (196 aa).

It in the N-terminal section; belongs to the TrpC family. The protein in the C-terminal section; belongs to the TrpF family. As to quaternary structure, monomer.

The catalysed reaction is N-(5-phospho-beta-D-ribosyl)anthranilate = 1-(2-carboxyphenylamino)-1-deoxy-D-ribulose 5-phosphate. It carries out the reaction 1-(2-carboxyphenylamino)-1-deoxy-D-ribulose 5-phosphate + H(+) = (1S,2R)-1-C-(indol-3-yl)glycerol 3-phosphate + CO2 + H2O. It participates in amino-acid biosynthesis; L-tryptophan biosynthesis; L-tryptophan from chorismate: step 3/5. It functions in the pathway amino-acid biosynthesis; L-tryptophan biosynthesis; L-tryptophan from chorismate: step 4/5. In terms of biological role, bifunctional enzyme that catalyzes two sequential steps of tryptophan biosynthetic pathway. The first reaction is catalyzed by the isomerase, coded by the TrpF domain; the second reaction is catalyzed by the synthase, coded by the TrpC domain. This Salmonella typhi protein is Tryptophan biosynthesis protein TrpCF (trpC).